The chain runs to 356 residues: Phenylalanine--tRNA ligase alpha subunit (356 aa).

Mg(2+) is bound at residue E258.

Belongs to the class-II aminoacyl-tRNA synthetase family. Phe-tRNA synthetase alpha subunit type 1 subfamily. As to quaternary structure, tetramer of two alpha and two beta subunits. It depends on Mg(2+) as a cofactor.

It localises to the cytoplasm. It carries out the reaction tRNA(Phe) + L-phenylalanine + ATP = L-phenylalanyl-tRNA(Phe) + AMP + diphosphate + H(+). This Macrococcus caseolyticus (strain JCSC5402) (Macrococcoides caseolyticum) protein is Phenylalanine--tRNA ligase alpha subunit.